A 346-amino-acid chain; its full sequence is Probable electron transfer flavoprotein subunit alpha, mitochondrial (346 aa).

285-313 serves as a coordination point for FAD; it reads LYVAVGISGAIQHLAGMKESKMIVAINKD.

Belongs to the ETF alpha-subunit/FixB family. Heterodimer of an alpha and a beta subunit. FAD serves as cofactor.

Its subcellular location is the mitochondrion matrix. Its function is as follows. The electron transfer flavoprotein serves as a specific electron acceptor for several dehydrogenases, including five acyl-CoA dehydrogenases, glutaryl-CoA and sarcosine dehydrogenase. It transfers the electrons to the main mitochondrial respiratory chain via ETF-ubiquinone oxidoreductase (ETF dehydrogenase). The polypeptide is Probable electron transfer flavoprotein subunit alpha, mitochondrial (ETF1) (Cryptococcus neoformans var. grubii (Filobasidiella neoformans var. grubii)).